The chain runs to 354 residues: Protein FAM181A (354 aa).

Composition is skewed to basic and acidic residues over residues 1-14 (MPLEERRSSGERND) and 129-142 (YLKRGSEDRPRRLL). Disordered stretches follow at residues 1–35 (MPLEERRSSGERNDAAPTNHRRPGEKRASTAKQVS), 117–160 (LPRG…CKEK), and 172–193 (AKEQLPQRQHPEAAQPGQVPMR).

It belongs to the FAM181 family.

In Homo sapiens (Human), this protein is Protein FAM181A (FAM181A).